A 445-amino-acid polypeptide reads, in one-letter code: Phosphoglucosamine mutase (445 aa).

S102 functions as the Phosphoserine intermediate in the catalytic mechanism. Mg(2+)-binding residues include S102, D240, D242, and D244. S102 bears the Phosphoserine mark.

The protein belongs to the phosphohexose mutase family. Mg(2+) serves as cofactor. Activated by phosphorylation.

It catalyses the reaction alpha-D-glucosamine 1-phosphate = D-glucosamine 6-phosphate. Catalyzes the conversion of glucosamine-6-phosphate to glucosamine-1-phosphate. This chain is Phosphoglucosamine mutase, found in Mycolicibacterium vanbaalenii (strain DSM 7251 / JCM 13017 / BCRC 16820 / KCTC 9966 / NRRL B-24157 / PYR-1) (Mycobacterium vanbaalenii).